We begin with the raw amino-acid sequence, 221 residues long: uncharacterized protein (221 aa).

Basic and acidic residues predominate over residues 1–16; it reads MESSRWDKDPPGERRP. The tract at residues 1 to 64 is disordered; that stretch reads MESSRWDKDP…SHTPQTNTRR (64 aa).

This is an uncharacterized protein from Homo sapiens (Human).